Reading from the N-terminus, the 334-residue chain is Lipoyl synthase (334 aa).

Cys-71, Cys-76, Cys-82, Cys-97, Cys-101, Cys-104, and Ser-312 together coordinate [4Fe-4S] cluster. One can recognise a Radical SAM core domain in the interval 83–301 (WSHGTATFMV…RQEGLRRGFR (219 aa)).

This sequence belongs to the radical SAM superfamily. Lipoyl synthase family. [4Fe-4S] cluster serves as cofactor.

It localises to the cytoplasm. It carries out the reaction [[Fe-S] cluster scaffold protein carrying a second [4Fe-4S](2+) cluster] + N(6)-octanoyl-L-lysyl-[protein] + 2 oxidized [2Fe-2S]-[ferredoxin] + 2 S-adenosyl-L-methionine + 4 H(+) = [[Fe-S] cluster scaffold protein] + N(6)-[(R)-dihydrolipoyl]-L-lysyl-[protein] + 4 Fe(3+) + 2 hydrogen sulfide + 2 5'-deoxyadenosine + 2 L-methionine + 2 reduced [2Fe-2S]-[ferredoxin]. Its pathway is protein modification; protein lipoylation via endogenous pathway; protein N(6)-(lipoyl)lysine from octanoyl-[acyl-carrier-protein]: step 2/2. Its function is as follows. Catalyzes the radical-mediated insertion of two sulfur atoms into the C-6 and C-8 positions of the octanoyl moiety bound to the lipoyl domains of lipoate-dependent enzymes, thereby converting the octanoylated domains into lipoylated derivatives. The sequence is that of Lipoyl synthase from Halorhodospira halophila (strain DSM 244 / SL1) (Ectothiorhodospira halophila (strain DSM 244 / SL1)).